The following is a 317-amino-acid chain: Cytochrome f (317 aa).

A signal peptide spans 1–34; that stretch reads MKGLKNQIMKKTSLFICTLLFILSIVFYPKITFA. Residues Tyr35, Cys55, Cys58, and His59 each coordinate heme. The helical transmembrane segment at 284–304 threads the bilayer; it reads VIGLIAFFIGVGLTQILLVLK.

The protein belongs to the cytochrome f family. The 4 large subunits of the cytochrome b6-f complex are cytochrome b6, subunit IV (17 kDa polypeptide, PetD), cytochrome f and the Rieske protein, while the 4 small subunits are PetG, PetL, PetM and PetN. The complex functions as a dimer. The cofactor is heme.

It is found in the cellular thylakoid membrane. In terms of biological role, component of the cytochrome b6-f complex, which mediates electron transfer between photosystem II (PSII) and photosystem I (PSI), cyclic electron flow around PSI, and state transitions. The protein is Cytochrome f of Prochlorococcus marinus (strain MIT 9215).